A 457-amino-acid polypeptide reads, in one-letter code: Aromatic amino acid transport protein AroP (457 aa).

The Cytoplasmic segment spans residues 1 to 19 (MMEGQQHGEQLKRGLKNRH). A helical transmembrane segment spans residues 20–40 (IQLIALGGAIGTGLFLGSASV). At 41 to 42 (IQ) the chain is on the periplasmic side. The chain crosses the membrane as a helical span at residues 43 to 63 (SAGPGIILGYAIAGFIAFLIM). Over 64 to 86 (RQLGEMVVEEPVAGSFSHFAYKY) the chain is Cytoplasmic. Residues 87-107 (WGSFAGFASGWNYWVLYVLVA) form a helical membrane-spanning segment. Over 108–117 (MAELTAVGKY) the chain is Periplasmic. Residues 118-138 (IQFWYPEIPTWVSAAVFFVVI) form a helical membrane-spanning segment. Residues 139–155 (NAINLTNVKVFGEMEFW) are Cytoplasmic-facing. Residues 156 to 176 (FAIIKVIAVVAMIIFGGWLLF) traverse the membrane as a helical segment. Topologically, residues 177 to 201 (SGNGGPQASVSNLWDQGGFLPHGFT) are periplasmic. A helical transmembrane segment spans residues 202–222 (GLVMMMAIIMFSFGGLELVGI). Residues 223 to 240 (TAAEADNPEQSIPKATNQ) are Cytoplasmic-facing. The chain crosses the membrane as a helical span at residues 241–261 (VIYRILIFYIGSLAVLLSLMP). The Periplasmic segment spans residues 262-271 (WTRVTADTSP). A helical membrane pass occupies residues 272–292 (FVLIFHELGDTFVANALNIVV). The Cytoplasmic segment spans residues 293–333 (LTAALSVYNSCVYCNSRMLFGLAQQGNAPKALASVDKRGVP). The helical transmembrane segment at 334 to 354 (VNTILVSALVTALCVLINYLA) threads the bilayer. Residues 355–358 (PESA) lie on the Periplasmic side of the membrane. The helical transmembrane segment at 359–379 (FGLLMALVVSALVINWAMISL) threads the bilayer. The Cytoplasmic segment spans residues 380–399 (AHMKFRRAKQEQGVVTRFPA). A helical transmembrane segment spans residues 400–420 (LLYPLGNWICLLFMAAVLVIM). The Periplasmic segment spans residues 421-425 (LMTPG). A helical transmembrane segment spans residues 426–446 (MAISVYLIPVWLIVLGIGYLF). At 447-457 (KEKTAKAVKAH) the chain is on the cytoplasmic side.

The protein belongs to the amino acid-polyamine-organocation (APC) superfamily. Amino acid transporter (AAT) (TC 2.A.3.1) family.

Its subcellular location is the cell inner membrane. The catalysed reaction is L-phenylalanine(in) + H(+)(in) = L-phenylalanine(out) + H(+)(out). It catalyses the reaction L-tryptophan(in) + H(+)(in) = L-tryptophan(out) + H(+)(out). It carries out the reaction L-tyrosine(in) + H(+)(in) = L-tyrosine(out) + H(+)(out). Its function is as follows. Permease that is involved in the active transport across the cytoplasmic membrane of all three aromatic amino acids, phenylalanine, tyrosine and tryptophan. In Shigella flexneri, this protein is Aromatic amino acid transport protein AroP (aroP).